The sequence spans 155 residues: Protein SprT-like (155 aa).

Positions 7–145 (QRHMEEVSLQ…GSCGGKLIQT (139 aa)) constitute a SprT-like domain. H67 is a Zn(2+) binding site. E68 is an active-site residue. H71 contributes to the Zn(2+) binding site.

Belongs to the SprT family. Requires Zn(2+) as cofactor.

Its subcellular location is the cytoplasm. The protein is Protein SprT-like of Listeria monocytogenes serotype 4b (strain CLIP80459).